Consider the following 375-residue polypeptide: DNA replication and repair protein RecF (375 aa).

30 to 37 (GENAQGKT) is a binding site for ATP.

This sequence belongs to the RecF family.

The protein resides in the cytoplasm. Its function is as follows. The RecF protein is involved in DNA metabolism; it is required for DNA replication and normal SOS inducibility. RecF binds preferentially to single-stranded, linear DNA. It also seems to bind ATP. The chain is DNA replication and repair protein RecF from Latilactobacillus sakei subsp. sakei (strain 23K) (Lactobacillus sakei subsp. sakei).